The primary structure comprises 342 residues: tRNA N6-adenosine threonylcarbamoyltransferase (342 aa).

2 residues coordinate Fe cation: H111 and H115. Substrate contacts are provided by residues 134–138, D167, G180, and N275; that span reads LVSGG. Residue D303 participates in Fe cation binding.

It belongs to the KAE1 / TsaD family. Fe(2+) serves as cofactor.

It localises to the cytoplasm. The enzyme catalyses L-threonylcarbamoyladenylate + adenosine(37) in tRNA = N(6)-L-threonylcarbamoyladenosine(37) in tRNA + AMP + H(+). Its function is as follows. Required for the formation of a threonylcarbamoyl group on adenosine at position 37 (t(6)A37) in tRNAs that read codons beginning with adenine. Is involved in the transfer of the threonylcarbamoyl moiety of threonylcarbamoyl-AMP (TC-AMP) to the N6 group of A37, together with TsaE and TsaB. TsaD likely plays a direct catalytic role in this reaction. The chain is tRNA N6-adenosine threonylcarbamoyltransferase from Paraburkholderia xenovorans (strain LB400).